The following is a 145-amino-acid chain: Succinate dehydrogenase assembly factor 2, mitochondrial (145 aa).

The protein belongs to the SDHAF2 family. In terms of assembly, interacts with the flavoprotein subunit within the SDH catalytic dimer.

The protein resides in the mitochondrion matrix. Plays an essential role in the assembly of succinate dehydrogenase (SDH), an enzyme complex (also referred to as respiratory complex II) that is a component of both the tricarboxylic acid (TCA) cycle and the mitochondrial electron transport chain, and which couples the oxidation of succinate to fumarate with the reduction of ubiquinone (coenzyme Q) to ubiquinol. Required for flavinylation (covalent attachment of FAD) of the flavoprotein subunit of the SDH catalytic dimer. This Yarrowia lipolytica (strain CLIB 122 / E 150) (Yeast) protein is Succinate dehydrogenase assembly factor 2, mitochondrial.